The chain runs to 803 residues: H(+)/Cl(-) exchange transporter 7 (803 aa).

Positions 1–46 (MANVSKKVSWSGRDRDDEEGAPLLRRTGQPDEETPLLNGAGPGARQ) are disordered. The Cytoplasmic portion of the chain corresponds to 1–124 (MANVSKKVSW…TAFRTVEIKR (124 aa)). Serine 9 is modified (phosphoserine). 2 helical membrane passes run 125 to 157 (WVIC…YRVI) and 172 to 195 (FSLL…VAFI). Positions 201–205 (GSGIP) match the Selectivity filter part_1 motif. Serine 202 is a binding site for chloride. Positions 204 to 211 (IPQIKCFL) form an intramembrane region, helical. 2 helical membrane-spanning segments follow: residues 221 to 239 (RLKT…VVGG) and 245 to 262 (EGPM…ISQG). A Selectivity filter part_2 motif is present at residues 243 to 247 (GKEGP). 2 intramembrane regions (helical) span residues 286–298 (FVSA…VSAA) and 302–310 (PVGGVLFSL). 5 consecutive transmembrane segments (helical) span residues 320-339 (FLTW…LNFV), 373-403 (IPVF…FRIR), 408-430 (PCLQ…FVLI), 485-505 (PMTL…TYGL), and 510-533 (GVFI…LSYL). A Selectivity filter part_3 motif is present at residues 510-514 (GVFIP). Phenylalanine 512 is a chloride binding site. An intramembrane region (helical) is located at residues 543–557 (GKYALMGAAAQLGGI). The segment at residues 558–560 (VRM) is an intramembrane region (note=Loop between two helices). Residues 561-572 (TLSLTVIMMEAT) constitute an intramembrane region (helical). Residues 573–576 (SNVT) constitute an intramembrane region (note=Loop between two helices). A helical transmembrane segment spans residues 577–595 (YGFPIMLVLMTAKIVGDVF). Residues 596–803 (IEGLYDMHIQ…GLEELSLAQT (208 aa)) are Cytoplasmic-facing. Tyrosine 600 lines the chloride pocket. 2 consecutive CBS domains span residues 629-693 (MSTP…VFVE) and 739-797 (MNPS…GLEE). ATP is bound by residues 656 to 658 (HNG) and 781 to 784 (TRKD). The residue at position 799 (serine 799) is a Phosphoserine.

This sequence belongs to the chloride channel (TC 2.A.49) family. ClC-7/CLCN7 subfamily. As to quaternary structure, chloride channel 7 are heteromers of alpha (CLCN7) and beta (OSTM1) subunits. In terms of tissue distribution, liver, spleen, kidneys and brain.

It is found in the lysosome membrane. It carries out the reaction 2 chloride(in) + H(+)(out) = 2 chloride(out) + H(+)(in). Its function is as follows. Slowly voltage-gated channel mediating the exchange of chloride ions against protons. Functions as antiporter and contributes to the acidification of the lysosome lumen and may be involved in maintaining lysosomal pH. The CLC channel family contains both chloride channels and proton-coupled anion transporters that exchange chloride or another anion for protons. The presence of conserved gating glutamate residues is typical for family members that function as antiporters. The chain is H(+)/Cl(-) exchange transporter 7 from Mus musculus (Mouse).